The sequence spans 441 residues: Glutamyl-tRNA reductase (441 aa).

Substrate-binding positions include 58-61, Ser-116, 121-123, and Gln-127; these read TCNR and EPD. The Nucleophile role is filled by Cys-59. 195–200 provides a ligand contact to NADP(+); that stretch reads GAGMAG.

This sequence belongs to the glutamyl-tRNA reductase family. Homodimer.

The catalysed reaction is (S)-4-amino-5-oxopentanoate + tRNA(Glu) + NADP(+) = L-glutamyl-tRNA(Glu) + NADPH + H(+). It participates in porphyrin-containing compound metabolism; protoporphyrin-IX biosynthesis; 5-aminolevulinate from L-glutamyl-tRNA(Glu): step 1/2. Functionally, catalyzes the NADPH-dependent reduction of glutamyl-tRNA(Glu) to glutamate 1-semialdehyde (GSA). The protein is Glutamyl-tRNA reductase of Ignicoccus hospitalis (strain KIN4/I / DSM 18386 / JCM 14125).